A 673-amino-acid polypeptide reads, in one-letter code: UvrABC system protein B (673 aa).

The Helicase ATP-binding domain maps to 30–417 (NSILLGNKYQ…SSVVVDQIIR (388 aa)). Residue 43 to 50 (GVTGSGKT) coordinates ATP. The short motif at 96–119 (YYDYYQPESYVPSKDLFIEKEATI) is the Beta-hairpin element. Positions 434-600 (QMEDLYSEIQ…TIVKKIQNIL (167 aa)) constitute a Helicase C-terminal domain. The region spanning 627–662 (KKLIDKLKFDLEEAVNDERFEDAIVLRDKIKELSSK) is the UVR domain.

The protein belongs to the UvrB family. Forms a heterotetramer with UvrA during the search for lesions. Interacts with UvrC in an incision complex.

It localises to the cytoplasm. The UvrABC repair system catalyzes the recognition and processing of DNA lesions. A damage recognition complex composed of 2 UvrA and 2 UvrB subunits scans DNA for abnormalities. Upon binding of the UvrA(2)B(2) complex to a putative damaged site, the DNA wraps around one UvrB monomer. DNA wrap is dependent on ATP binding by UvrB and probably causes local melting of the DNA helix, facilitating insertion of UvrB beta-hairpin between the DNA strands. Then UvrB probes one DNA strand for the presence of a lesion. If a lesion is found the UvrA subunits dissociate and the UvrB-DNA preincision complex is formed. This complex is subsequently bound by UvrC and the second UvrB is released. If no lesion is found, the DNA wraps around the other UvrB subunit that will check the other stand for damage. This chain is UvrABC system protein B, found in Borreliella burgdorferi (strain ATCC 35210 / DSM 4680 / CIP 102532 / B31) (Borrelia burgdorferi).